The primary structure comprises 323 residues: Mycothiol acetyltransferase (323 aa).

N-acetyltransferase domains lie at 5 to 145 (LTTD…LPLR) and 168 to 323 (VEIR…PEER). Residue E36 participates in 1D-myo-inositol 2-(L-cysteinylamino)-2-deoxy-alpha-D-glucopyranoside binding. 83 to 85 (VAV) lines the acetyl-CoA pocket. Positions 195, 236, and 252 each coordinate 1D-myo-inositol 2-(L-cysteinylamino)-2-deoxy-alpha-D-glucopyranoside. Acetyl-CoA is bound by residues 256–258 (VGV) and 263–269 (QGSGLGR). Y290 contacts 1D-myo-inositol 2-(L-cysteinylamino)-2-deoxy-alpha-D-glucopyranoside. An acetyl-CoA-binding site is contributed by 295-300 (NRPAVQ).

Belongs to the acetyltransferase family. MshD subfamily. In terms of assembly, monomer.

It carries out the reaction 1D-myo-inositol 2-(L-cysteinylamino)-2-deoxy-alpha-D-glucopyranoside + acetyl-CoA = mycothiol + CoA + H(+). In terms of biological role, catalyzes the transfer of acetyl from acetyl-CoA to desacetylmycothiol (Cys-GlcN-Ins) to form mycothiol. The chain is Mycothiol acetyltransferase from Thermobifida fusca (strain YX).